The chain runs to 210 residues: Thiamine-phosphate synthase (210 aa).

4-amino-2-methyl-5-(diphosphooxymethyl)pyrimidine-binding positions include 36-40 and asparagine 68; that span reads QLREK. The Mg(2+) site is built by aspartate 69 and aspartate 88. Residue serine 107 coordinates 4-amino-2-methyl-5-(diphosphooxymethyl)pyrimidine. 133–135 is a binding site for 2-[(2R,5Z)-2-carboxy-4-methylthiazol-5(2H)-ylidene]ethyl phosphate; sequence TGS. Position 136 (lysine 136) interacts with 4-amino-2-methyl-5-(diphosphooxymethyl)pyrimidine. 2-[(2R,5Z)-2-carboxy-4-methylthiazol-5(2H)-ylidene]ethyl phosphate is bound by residues glycine 164 and 184–185; that span reads IS.

The protein belongs to the thiamine-phosphate synthase family. Mg(2+) is required as a cofactor.

The catalysed reaction is 2-[(2R,5Z)-2-carboxy-4-methylthiazol-5(2H)-ylidene]ethyl phosphate + 4-amino-2-methyl-5-(diphosphooxymethyl)pyrimidine + 2 H(+) = thiamine phosphate + CO2 + diphosphate. The enzyme catalyses 2-(2-carboxy-4-methylthiazol-5-yl)ethyl phosphate + 4-amino-2-methyl-5-(diphosphooxymethyl)pyrimidine + 2 H(+) = thiamine phosphate + CO2 + diphosphate. It carries out the reaction 4-methyl-5-(2-phosphooxyethyl)-thiazole + 4-amino-2-methyl-5-(diphosphooxymethyl)pyrimidine + H(+) = thiamine phosphate + diphosphate. The protein operates within cofactor biosynthesis; thiamine diphosphate biosynthesis; thiamine phosphate from 4-amino-2-methyl-5-diphosphomethylpyrimidine and 4-methyl-5-(2-phosphoethyl)-thiazole: step 1/1. Functionally, condenses 4-methyl-5-(beta-hydroxyethyl)thiazole monophosphate (THZ-P) and 2-methyl-4-amino-5-hydroxymethyl pyrimidine pyrophosphate (HMP-PP) to form thiamine monophosphate (TMP). The protein is Thiamine-phosphate synthase of Moorella thermoacetica (strain ATCC 39073 / JCM 9320).